Consider the following 154-residue polypeptide: Ribonuclease H (154 aa).

The RNase H type-1 domain occupies 1–141 (MKRIEAYTDG…ADELAREGME (141 aa)). Mg(2+) is bound by residues aspartate 9, glutamate 47, aspartate 69, and aspartate 133.

The protein belongs to the RNase H family. In terms of assembly, monomer. Requires Mg(2+) as cofactor.

The protein resides in the cytoplasm. The catalysed reaction is Endonucleolytic cleavage to 5'-phosphomonoester.. Functionally, endonuclease that specifically degrades the RNA of RNA-DNA hybrids. This is Ribonuclease H from Brucella anthropi (strain ATCC 49188 / DSM 6882 / CCUG 24695 / JCM 21032 / LMG 3331 / NBRC 15819 / NCTC 12168 / Alc 37) (Ochrobactrum anthropi).